Consider the following 505-residue polypeptide: ADP-ribosylarginine hydrolase CG2909 (505 aa).

ADP-D-ribose is bound by residues Arg-198, Gly-336, Gly-338, Gly-340, Val-341, Trp-342, Trp-377, Asp-432, Asn-439, Glu-440, Gly-450, and Asp-451.

It carries out the reaction N(omega)-(ADP-D-ribosyl)-L-arginyl-[protein] + H2O = ADP-D-ribose + L-arginyl-[protein]. The catalysed reaction is N(omega)-(ADP-D-ribosyl)-L-arginine + H2O = ADP-D-ribose + L-arginine. Its function is as follows. Protein ADP-ribosyl hydrolase that specifically removes mono-ADP-ribosyl modifications from protein arginine residues. This Drosophila melanogaster (Fruit fly) protein is ADP-ribosylarginine hydrolase CG2909.